The sequence spans 493 residues: MKEMMMFKRSVIAMACIFALSACGGGGGGSPDVKSADTLSKPAAPVVSEKETEAKEDAPQAGSQGQGAPSAQGSQDMAAVSEENTGNGGAVTADNPKNEDEVAQNDMPQNAAGTDSSTPNHTPDPNMLAGNMENQATDAGESSQPANQPDMANAADGMQGDDPSAGGQNAGNTAAQGANQAGNNQAAGSSDPIPASNPAPANGGSNFGRVDLANGVLIDGPSQNITLTHCKGDSCSGNNFLDEEVQLKSEFEKLSDADKISNYKKDGKNDKFVGLVADSVQMKGINQYIIFYKPKPTSFARFRRSARSRRSLPAEMPLIPVNQADTLIVDGEAVSLTGHSGNIFAPEGNYRYLTYGAEKLPGGSYALRVQGEPAKGEMLAGAAVYNGEVLHFHTENGRPYPTRGRFAAKVDFGSKSVDGIIDSGDDLHMGTQKFKAAIDGNGFKGTWTENGSGDVSGKFYGPAGEEVAGKYSYRPTDAEKGGFGVFAGKKEQD.

The signal sequence occupies residues 1–22 (MKEMMMFKRSVIAMACIFALSA). The N-palmitoyl cysteine moiety is linked to residue Cys23. Cys23 is lipidated: S-diacylglycerol cysteine. The tract at residues 27–206 (GGGSPDVKSA…NPAPANGGSN (180 aa)) is disordered. Residues 48–58 (SEKETEAKEDA) are compositionally biased toward basic and acidic residues. Positions 59–75 (PQAGSQGQGAPSAQGSQ) are enriched in low complexity. Polar residues-rich tracts occupy residues 106–123 (DMPQNAAGTDSSTPNHTP) and 132–147 (MENQATDAGESSQPAN). A compositionally biased stretch (low complexity) spans 165–188 (AGGQNAGNTAAQGANQAGNNQAAG). An Arg-rich motif motif is present at residues 301–311 (RFRRSARSRRS).

This sequence belongs to the NHBA family. As to quaternary structure, the C-terminal beta-barrel forms a monomer. In terms of processing, cleaved in vivo by the Neisserial phase-variable autotransporter/serine protease NalP to give 2 fragments. The N-terminus remains in the cell outer membrane while the C-terminus (beginning on Ser-298) is soluble; this soluble fragment is called C2. Cleaved in vitro by human lactoferrin (LTF, between Arg-310 and Ser-311), this fragment is called C1. Recombinant and cell surface protein is cleaved by human saliva kallikrein (KLK1) between Ser-308 and Arg-309; in saliva kallikrein is more active on NHBA than lactoferrin. Human plasma kallikrein (KLKB1) cleaves in a similar manner to KLK1.

It is found in the cell outer membrane. Its function is as follows. A major human immunogenic protein detected in patients recovering from meningitidis, where it induces bactericidal antibodies. Binds human cells, heparin and heparan sulfate proteoglycan in vitro via the Arg-rich motif. Heparin-binding to this protein protects bacteria against killing by bactericidal antibodies (serum killing). The bacteria binds a number of human extracellular sialyated and/or sulfated glycans via this protein, including chondroitin sulfate, heparin and ganglioside GT3. Whole protein binds DNA. Plays a role in extracellular-DNA (eDNA) mediated biofilm formation. In some strains (including cc32 strain H44/76 but not cc11 strain B16B6) eDNA stimulates biofilm formation. When NHBA is not processed by NalP, biofilm formation increases. This is probably because the number of positively charged, NHBA- and IgA-derived DNA-binding peptides on the cell surface rises, resulting in increased DNA-binding peptides and increased biofilm formation. The sequence is that of Neisserial heparin binding antigen from Neisseria meningitidis serogroup B / serotype 15 (strain H44/76).